The primary structure comprises 177 residues: Dual-action ribosomal maturation protein DarP (177 aa).

Belongs to the DarP family.

It is found in the cytoplasm. Functionally, member of a network of 50S ribosomal subunit biogenesis factors which assembles along the 30S-50S interface, preventing incorrect 23S rRNA structures from forming. Promotes peptidyl transferase center (PTC) maturation. The chain is Dual-action ribosomal maturation protein DarP from Glaesserella parasuis serovar 5 (strain SH0165) (Haemophilus parasuis).